A 435-amino-acid chain; its full sequence is Serine--tRNA ligase (435 aa).

239–241 provides a ligand contact to L-serine; that stretch reads TAE. 270–272 contributes to the ATP binding site; the sequence is RAE. An L-serine-binding site is contributed by Glu-293. Residue 357-360 coordinates ATP; it reads EISS. Ser-393 provides a ligand contact to L-serine.

The protein belongs to the class-II aminoacyl-tRNA synthetase family. Type-1 seryl-tRNA synthetase subfamily. As to quaternary structure, homodimer. The tRNA molecule binds across the dimer.

It is found in the cytoplasm. The enzyme catalyses tRNA(Ser) + L-serine + ATP = L-seryl-tRNA(Ser) + AMP + diphosphate + H(+). It catalyses the reaction tRNA(Sec) + L-serine + ATP = L-seryl-tRNA(Sec) + AMP + diphosphate + H(+). It functions in the pathway aminoacyl-tRNA biosynthesis; selenocysteinyl-tRNA(Sec) biosynthesis; L-seryl-tRNA(Sec) from L-serine and tRNA(Sec): step 1/1. In terms of biological role, catalyzes the attachment of serine to tRNA(Ser). Is also able to aminoacylate tRNA(Sec) with serine, to form the misacylated tRNA L-seryl-tRNA(Sec), which will be further converted into selenocysteinyl-tRNA(Sec). The sequence is that of Serine--tRNA ligase from Parvibaculum lavamentivorans (strain DS-1 / DSM 13023 / NCIMB 13966).